The primary structure comprises 113 residues: DNA-directed RNA polymerase subunit omega (113 aa).

It belongs to the RNA polymerase subunit omega family. As to quaternary structure, the RNAP catalytic core consists of 2 alpha, 1 beta, 1 beta' and 1 omega subunit. When a sigma factor is associated with the core the holoenzyme is formed, which can initiate transcription.

It carries out the reaction RNA(n) + a ribonucleoside 5'-triphosphate = RNA(n+1) + diphosphate. Functionally, promotes RNA polymerase assembly. Latches the N- and C-terminal regions of the beta' subunit thereby facilitating its interaction with the beta and alpha subunits. The chain is DNA-directed RNA polymerase subunit omega from Rhizorhabdus wittichii (strain DSM 6014 / CCUG 31198 / JCM 15750 / NBRC 105917 / EY 4224 / RW1) (Sphingomonas wittichii).